The primary structure comprises 274 residues: Short-chain dehydrogenase/reductase bsc3 (274 aa).

NADP(+) is bound by residues Ile14, Tyr170, Lys174, Ile203, and Thr205. Catalysis depends on Tyr170, which acts as the Proton donor. Catalysis depends on Lys174, which acts as the Lowers pKa of active site Tyr.

It belongs to the short-chain dehydrogenases/reductases (SDR) family.

The protein operates within mycotoxin biosynthesis. Functionally, short-chain dehydrogenase/reductase; part of the gene cluster that mediates the biosynthesis of the diterpene glucoside brassicicene C. In the first step of the brassicicene C biosynthesis, the bifunctional diterpene synthase bsc8 that possesses both prenyl transferase and terpene cyclase activity, converts isopentenyl diphosphate and dimethylallyl diphosphate into geranylgeranyl diphosphate (GGDP) that is further converted into fusicocca-2,10(14)-diene, the first precursor for brassicicene C. Fusicocca-2,10(14)-diene is then substrate of cytochrome P450 monooxygenase bsc1 for hydroxylation at the C-8 position. Oxidation at C-16 position to aldehyde is then catalyzed by the cytochrome P450 monooyxygenase bsc7, yielding fusicocca-2,10(14)-diene-8-beta,16-diol. Follows the isomerization of the double bond and reduction of aldehyde to alcohol catalyzed by the short-chain dehydrogenase/reductase bsc3 to yield the diol compound fusicocca-1,10(14)-diene-8 beta,16-diol. The next step is the oxidation at the C-3 position of fusicocca-2,10(14)-diene-8-beta,16-diol catalyzed by the alpha-ketoglutarate dependent dioxygenase bsc9, to produce a triol compound. Methylation of the hydroxy group at position 16 is performed by the methyltransferase bsc6. 16-O-methylation is followed by oxidation at the C-13 position to ketone and an alkyl shift of the methyl group leads to brassicicene C. Although the probable acetyltransferase bsc4 is included in the gene cluster, no acetylation reactions are necessary for brassicicene C biosynthesis. However, the fact that brassicicene E, which is a structurally related compound having an acetoxy group at position 12, was previously isolated from another strain of A.brassicicola suggests that the ATCC 96836 strain might also produce a small amount of brassicicene E. The polypeptide is Short-chain dehydrogenase/reductase bsc3 (Alternaria brassicicola (Dark leaf spot agent)).